Consider the following 191-residue polypeptide: MSADLQETPKAGDASLERLEQSVLGFRRLSNQLLAVIVTIGGLGFTLTCLSSYLGRDLLPIGSPSSLLFVPQGLVMGLYGIAGLLLASYLWAMININLGAGSNNFDKASGMVKICRRGYFKLISAEFPLKDVKAVKVEVRDGFNPLRRLSLRVQGRRDITLTRVGQPLPLAQLEQDGAELARFLDVNLEGL.

2 consecutive transmembrane segments (helical) span residues 33–53 and 74–94; these read LLAV…LSSY and LVMG…WAMI.

Belongs to the Ycf4 family.

The protein resides in the cellular thylakoid membrane. Seems to be required for the assembly of the photosystem I complex. In Prochlorococcus marinus (strain MIT 9303), this protein is Photosystem I assembly protein Ycf4.